Here is a 116-residue protein sequence, read N- to C-terminus: ATP-dependent Clp protease adapter protein ClpS (116 aa).

Polar residues predominate over residues 1 to 11 (MRRFNTIMQGK). The tract at residues 1–23 (MRRFNTIMQGKTNGGNGPESGTV) is disordered.

This sequence belongs to the ClpS family. Binds to the N-terminal domain of the chaperone ClpA.

Involved in the modulation of the specificity of the ClpAP-mediated ATP-dependent protein degradation. The sequence is that of ATP-dependent Clp protease adapter protein ClpS from Brucella melitensis biotype 2 (strain ATCC 23457).